The sequence spans 334 residues: Putative heat shock protein HSP 90-alpha A5 (334 aa).

The tract at residues 55-107 (KRNKQVSDAEAEKKEDKRKKKKESNDKPEIEDVGSDEEEEKKDADKKKKKSKE) is disordered. Positions 59–69 (QVSDAEAEKKE) are enriched in basic and acidic residues. Positions 85-94 (EDVGSDEEEE) are enriched in acidic residues. The residue at position 89 (Ser-89) is a Phosphoserine. The stretch at 234-267 (LELPEDEEEKKKQEEKKTKFENLCKIMKDMLEKK) forms a coiled coil. The interval 314–334 (EMPPLRGGDDTSRMEEVGGSG) is disordered. Basic and acidic residues predominate over residues 320 to 334 (GGDDTSRMEEVGGSG). The TPR repeat-binding signature appears at 327–331 (MEEVG).

Belongs to the heat shock protein 90 family. As to quaternary structure, homodimer.

The protein localises to the cytoplasm. Putative molecular chaperone that may promote the maturation, structural maintenance and proper regulation of specific target proteins. This chain is Putative heat shock protein HSP 90-alpha A5 (HSP90AA5P), found in Homo sapiens (Human).